The primary structure comprises 257 residues: Type III pantothenate kinase (257 aa).

Residue 6 to 13 (DCGNTNTV) participates in ATP binding. Residue 107-110 (GPDR) coordinates substrate. Asp109 functions as the Proton acceptor in the catalytic mechanism. Asp129 contacts K(+). Thr132 serves as a coordination point for ATP. Thr184 contributes to the substrate binding site.

This sequence belongs to the type III pantothenate kinase family. In terms of assembly, homodimer. NH4(+) serves as cofactor. Requires K(+) as cofactor.

The protein resides in the cytoplasm. The catalysed reaction is (R)-pantothenate + ATP = (R)-4'-phosphopantothenate + ADP + H(+). The protein operates within cofactor biosynthesis; coenzyme A biosynthesis; CoA from (R)-pantothenate: step 1/5. Catalyzes the phosphorylation of pantothenate (Pan), the first step in CoA biosynthesis. In Cereibacter sphaeroides (strain ATCC 17029 / ATH 2.4.9) (Rhodobacter sphaeroides), this protein is Type III pantothenate kinase.